An 85-amino-acid polypeptide reads, in one-letter code: MAQKKGGGSTRNGRDSQPKMLGVKAFGGQAVQAGSIIVRQRGTQFHAGSNVGIGKDHTLFALVDGKVSFAVKGERNRRTVAIDPV.

A compositionally biased stretch (gly residues) spans 1–10 (MAQKKGGGST). The tract at residues 1 to 20 (MAQKKGGGSTRNGRDSQPKM) is disordered.

It belongs to the bacterial ribosomal protein bL27 family.

The protein is Large ribosomal subunit protein bL27 of Methylibium petroleiphilum (strain ATCC BAA-1232 / LMG 22953 / PM1).